The primary structure comprises 218 residues: MGQKVHPLGFRLRITQTHRSSWFASSKNYPETLAEDYAIRNYVKVNLSSAGISKVEIHRKSDQVELEIHTSRPGIIVGRSGSGIDTIKEDLRKIINKNNQIRINVTELKNVDADANLIAEFIAQQLEKRIAFRRATRQAIQRAQRANVQGIKVQVSGRLNGAEIARSEWVREGRVPLQTLRADIDYATKEADTTYGKLGVKVWVFNGEKTPSIAKVEV.

The KH type-2 domain maps to 39–109 (IRNYVKVNLS…QIRINVTELK (71 aa)).

Belongs to the universal ribosomal protein uS3 family. Part of the 30S ribosomal subunit.

The protein resides in the plastid. It localises to the chloroplast. This chain is Small ribosomal subunit protein uS3c (rps3), found in Rhodomonas salina (Cryptomonas salina).